The following is a 903-amino-acid chain: Probable dipeptidyl-aminopeptidase B (903 aa).

The tract at residues 1 to 83 (MGKFEDDGNS…PLISSGTKTG (83 aa)) is disordered. Residues 1–90 (MGKFEDDGNS…KTGSSSRLRK (90 aa)) are Cytoplasmic-facing. The segment covering 10–37 (SESVPLTRQRSESLASQTSTDSGLSIAS) has biased composition (polar residues). The helical; Signal-anchor for type II membrane protein transmembrane segment at 91-111 (IVWLLVLLCVGGWVLSFVLFL) threads the bilayer. Over 112–903 (TQKRPDTAAL…TANPKPQEST (792 aa)) the chain is Vacuolar. The disordered stretch occupies residues 121–143 (LSSASTVEIHEPGPATGGTSHGK). Residues Asn-268, Asn-349, and Asn-640 are each glycosylated (N-linked (GlcNAc...) asparagine). Ser-754 acts as the Charge relay system in catalysis. N-linked (GlcNAc...) asparagine glycosylation occurs at Asn-808. Residues Asp-831 and His-864 each act as charge relay system in the active site.

The protein belongs to the peptidase S9B family.

Its subcellular location is the vacuole membrane. It carries out the reaction Release of an N-terminal dipeptide, Xaa-Yaa-|-Zaa-, from a polypeptide, preferentially when Yaa is Pro, provided Zaa is neither Pro nor hydroxyproline.. Its function is as follows. Type IV dipeptidyl-peptidase which removes N-terminal dipeptides sequentially from polypeptides having unsubstituted N-termini provided that the penultimate residue is proline. The sequence is that of Probable dipeptidyl-aminopeptidase B (dapB) from Penicillium rubens (strain ATCC 28089 / DSM 1075 / NRRL 1951 / Wisconsin 54-1255) (Penicillium chrysogenum).